Consider the following 274-residue polypeptide: Coiled-coil domain-containing protein 28A (274 aa).

Residues 121-166 (VSKSTGFSNPASQSTSQRPKLKRVMKEKTKPQGGEGKGAQSTPIQH) are disordered. Over residues 122 to 138 (SKSTGFSNPASQSTSQR) the composition is skewed to polar residues. The stretch at 234-263 (KRKTASDSNLDRLLSDLEELNSSIQKLHLA) forms a coiled coil.

This Homo sapiens (Human) protein is Coiled-coil domain-containing protein 28A (CCDC28A).